A 717-amino-acid chain; its full sequence is Photosystem I P700 chlorophyll a apoprotein A1 (717 aa).

A run of 8 helical transmembrane segments spans residues 58-81 (VFSA…FHGA), 144-167 (LYCT…FHYH), 183-207 (LNHH…HVSL), 279-297 (IAHH…GHMY), 334-357 (WHAQ…HHMY), 373-399 (LSLF…IFMV), 421-443 (AIIS…LYIH), and 519-537 (FLVH…LILL). Residues cysteine 561 and cysteine 570 each contribute to the [4Fe-4S] cluster site. 2 helical membrane passes run 577–598 (HVFL…HFSW) and 652–674 (LSAY…MFLF). Residue histidine 663 coordinates chlorophyll a'. Methionine 671 and tyrosine 679 together coordinate chlorophyll a. Tryptophan 680 contributes to the phylloquinone binding site. Residues 712-717 (AVGVTH) traverse the membrane as a helical segment.

This sequence belongs to the PsaA/PsaB family. As to quaternary structure, the PsaA/B heterodimer binds the P700 chlorophyll special pair and subsequent electron acceptors. PSI consists of a core antenna complex that captures photons, and an electron transfer chain that converts photonic excitation into a charge separation. The eukaryotic PSI reaction center is composed of at least 11 subunits. Requires P700 is a chlorophyll a/chlorophyll a' dimer, A0 is one or more chlorophyll a, A1 is one or both phylloquinones and FX is a shared 4Fe-4S iron-sulfur center. as cofactor.

It is found in the plastid. The protein localises to the chloroplast thylakoid membrane. It catalyses the reaction reduced [plastocyanin] + hnu + oxidized [2Fe-2S]-[ferredoxin] = oxidized [plastocyanin] + reduced [2Fe-2S]-[ferredoxin]. In terms of biological role, psaA and PsaB bind P700, the primary electron donor of photosystem I (PSI), as well as the electron acceptors A0, A1 and FX. PSI is a plastocyanin-ferredoxin oxidoreductase, converting photonic excitation into a charge separation, which transfers an electron from the donor P700 chlorophyll pair to the spectroscopically characterized acceptors A0, A1, FX, FA and FB in turn. Oxidized P700 is reduced on the lumenal side of the thylakoid membrane by plastocyanin. The chain is Photosystem I P700 chlorophyll a apoprotein A1 from Drimys winteri (Winter's bark).